The primary structure comprises 316 residues: 4-hydroxy-3-methylbut-2-enyl diphosphate reductase (316 aa).

Cys-12 serves as a coordination point for [4Fe-4S] cluster. (2E)-4-hydroxy-3-methylbut-2-enyl diphosphate contacts are provided by His-41 and His-74. Dimethylallyl diphosphate contacts are provided by His-41 and His-74. Isopentenyl diphosphate-binding residues include His-41 and His-74. Cys-96 is a [4Fe-4S] cluster binding site. Residue His-124 coordinates (2E)-4-hydroxy-3-methylbut-2-enyl diphosphate. His-124 lines the dimethylallyl diphosphate pocket. Position 124 (His-124) interacts with isopentenyl diphosphate. The active-site Proton donor is Glu-126. Residue Thr-165 participates in (2E)-4-hydroxy-3-methylbut-2-enyl diphosphate binding. Cys-195 lines the [4Fe-4S] cluster pocket. (2E)-4-hydroxy-3-methylbut-2-enyl diphosphate contacts are provided by Ser-223, Ser-224, Asn-225, and Ser-267. Residues Ser-223, Ser-224, Asn-225, and Ser-267 each contribute to the dimethylallyl diphosphate site. The isopentenyl diphosphate site is built by Ser-223, Ser-224, Asn-225, and Ser-267.

This sequence belongs to the IspH family. It depends on [4Fe-4S] cluster as a cofactor.

It catalyses the reaction isopentenyl diphosphate + 2 oxidized [2Fe-2S]-[ferredoxin] + H2O = (2E)-4-hydroxy-3-methylbut-2-enyl diphosphate + 2 reduced [2Fe-2S]-[ferredoxin] + 2 H(+). It carries out the reaction dimethylallyl diphosphate + 2 oxidized [2Fe-2S]-[ferredoxin] + H2O = (2E)-4-hydroxy-3-methylbut-2-enyl diphosphate + 2 reduced [2Fe-2S]-[ferredoxin] + 2 H(+). It participates in isoprenoid biosynthesis; dimethylallyl diphosphate biosynthesis; dimethylallyl diphosphate from (2E)-4-hydroxy-3-methylbutenyl diphosphate: step 1/1. Its pathway is isoprenoid biosynthesis; isopentenyl diphosphate biosynthesis via DXP pathway; isopentenyl diphosphate from 1-deoxy-D-xylulose 5-phosphate: step 6/6. Its function is as follows. Catalyzes the conversion of 1-hydroxy-2-methyl-2-(E)-butenyl 4-diphosphate (HMBPP) into a mixture of isopentenyl diphosphate (IPP) and dimethylallyl diphosphate (DMAPP). Acts in the terminal step of the DOXP/MEP pathway for isoprenoid precursor biosynthesis. This chain is 4-hydroxy-3-methylbut-2-enyl diphosphate reductase, found in Acidithiobacillus ferrooxidans (strain ATCC 53993 / BNL-5-31) (Leptospirillum ferrooxidans (ATCC 53993)).